The sequence spans 349 residues: Isopentenyl-diphosphate delta-isomerase (349 aa).

9-10 lines the substrate pocket; sequence RK. Residues 65–67, serine 95, and asparagine 124 each bind FMN; that span reads AMT. Residue 95 to 97 coordinates substrate; it reads STH. Residue glutamine 154 participates in substrate binding. Glutamate 155 provides a ligand contact to Mg(2+). FMN contacts are provided by residues lysine 186, serine 211, threonine 216, 262–264, and 283–284; these read GVR and SR.

The protein belongs to the IPP isomerase type 2 family. As to quaternary structure, homooctamer. Dimer of tetramers. The cofactor is FMN. NADPH serves as cofactor. It depends on Mg(2+) as a cofactor.

It localises to the cytoplasm. It carries out the reaction isopentenyl diphosphate = dimethylallyl diphosphate. Functionally, involved in the biosynthesis of isoprenoids. Catalyzes the 1,3-allylic rearrangement of the homoallylic substrate isopentenyl (IPP) to its allylic isomer, dimethylallyl diphosphate (DMAPP). The chain is Isopentenyl-diphosphate delta-isomerase from Staphylococcus haemolyticus (strain JCSC1435).